Consider the following 589-residue polypeptide: L-fucose isomerase (589 aa).

Active-site proton acceptor residues include Glu-340 and Asp-364. Mn(2+)-binding residues include Glu-340, Asp-364, and His-527.

Belongs to the L-fucose isomerase family. The cofactor is Mn(2+).

It is found in the cytoplasm. The enzyme catalyses L-fucose = L-fuculose. It functions in the pathway carbohydrate degradation; L-fucose degradation; L-lactaldehyde and glycerone phosphate from L-fucose: step 1/3. In terms of biological role, converts the aldose L-fucose into the corresponding ketose L-fuculose. The polypeptide is L-fucose isomerase (Haemophilus influenzae (strain ATCC 51907 / DSM 11121 / KW20 / Rd)).